A 145-amino-acid chain; its full sequence is Basic phospholipase A2 cL038 (145 aa).

An N-terminal signal peptide occupies residues 1–21 (MYPAHLLVLLAVCVSLLGASA). Residues 22-27 (IPPLPL) constitute a propeptide that is removed on maturation. Cystine bridges form between cysteine 38–cysteine 98, cysteine 54–cysteine 144, cysteine 56–cysteine 72, cysteine 71–cysteine 125, cysteine 78–cysteine 118, cysteine 87–cysteine 111, and cysteine 105–cysteine 116. Ca(2+)-binding residues include tyrosine 55, glycine 57, and glycine 59. The active site involves histidine 75. Residue aspartate 76 participates in Ca(2+) binding. Aspartate 119 is a catalytic residue.

It belongs to the phospholipase A2 family. Group I subfamily. D49 sub-subfamily. The cofactor is Ca(2+). In terms of tissue distribution, expressed by the venom gland.

It is found in the secreted. The catalysed reaction is a 1,2-diacyl-sn-glycero-3-phosphocholine + H2O = a 1-acyl-sn-glycero-3-phosphocholine + a fatty acid + H(+). In terms of biological role, PLA2 catalyzes the calcium-dependent hydrolysis of the 2-acyl groups in 3-sn-phosphoglycerides. The chain is Basic phospholipase A2 cL038 from Laticauda semifasciata (Black-banded sea krait).